A 282-amino-acid chain; its full sequence is Osteoclast-associated immunoglobulin-like receptor (282 aa).

The N-terminal stretch at 1-18 is a signal peptide; the sequence is MALVLILQLLTLWPLCHT. Ig-like domains lie at 22–116 and 126–219; these read PSVP…SQPS and ELPR…SWEG. Asn-48 carries N-linked (GlcNAc...) asparagine glycosylation. Residues Cys-53 and Cys-100 are joined by a disulfide bond. N-linked (GlcNAc...) asparagine glycosylation occurs at Asn-145. Residues 221 to 282 form a disordered region; sequence GPEARPASSA…PAPPPSDPGV (62 aa). Positions 273–282 are enriched in pro residues; that stretch reads PAPPPSDPGV.

This sequence belongs to the leukocyte receptor complex/polymeric immunoglobulin receptor (PIR/LRC) family.

The protein resides in the secreted. It localises to the cell membrane. Its function is as follows. Regulator of osteoclastogenesis which plays an important bone-specific function in osteoclast differentiation. The chain is Osteoclast-associated immunoglobulin-like receptor (OSCAR) from Homo sapiens (Human).